We begin with the raw amino-acid sequence, 541 residues long: Chaperonin GroEL (541 aa).

ATP is bound by residues 29 to 32, 86 to 90, Gly413, 476 to 478, and Asp492; these read TLGP, DGTTT, and NAA.

This sequence belongs to the chaperonin (HSP60) family. Forms a cylinder of 14 subunits composed of two heptameric rings stacked back-to-back. Interacts with the co-chaperonin GroES.

It localises to the cytoplasm. It catalyses the reaction ATP + H2O + a folded polypeptide = ADP + phosphate + an unfolded polypeptide.. Functionally, together with its co-chaperonin GroES, plays an essential role in assisting protein folding. The GroEL-GroES system forms a nano-cage that allows encapsulation of the non-native substrate proteins and provides a physical environment optimized to promote and accelerate protein folding. This Enterococcus faecalis (strain ATCC 700802 / V583) protein is Chaperonin GroEL.